A 432-amino-acid polypeptide reads, in one-letter code: D-amino acid dehydrogenase (432 aa).

An FAD-binding site is contributed by 3–17; it reads VVILGSGVVGVTSAW.

This sequence belongs to the DadA oxidoreductase family. FAD serves as cofactor.

It catalyses the reaction a D-alpha-amino acid + A + H2O = a 2-oxocarboxylate + AH2 + NH4(+). It participates in amino-acid degradation; D-alanine degradation; NH(3) and pyruvate from D-alanine: step 1/1. Oxidative deamination of D-amino acids. The polypeptide is D-amino acid dehydrogenase (Salmonella agona (strain SL483)).